Reading from the N-terminus, the 209-residue chain is Large ribosomal subunit protein uL3 (209 aa).

Residues 141–163 (RAVGSMGASSDPSRTFKNKRMPG) are disordered.

It belongs to the universal ribosomal protein uL3 family. As to quaternary structure, part of the 50S ribosomal subunit. Forms a cluster with proteins L14 and L19.

Its function is as follows. One of the primary rRNA binding proteins, it binds directly near the 3'-end of the 23S rRNA, where it nucleates assembly of the 50S subunit. This Clostridium botulinum (strain Kyoto / Type A2) protein is Large ribosomal subunit protein uL3.